The following is a 474-amino-acid chain: Bifunctional protein HldE (474 aa).

A ribokinase region spans residues 1 to 321; it reads MILSSSLRPT…EYLHSSHQGE (321 aa). 198–201 lines the ATP pocket; the sequence is NKKE. The active site involves Asp-266. The segment at 348–474 is cytidylyltransferase; it reads FTNGCFDILH…SAVVKKIQGS (127 aa).

This sequence in the N-terminal section; belongs to the carbohydrate kinase PfkB family. The protein in the C-terminal section; belongs to the cytidylyltransferase family. Homodimer.

The enzyme catalyses D-glycero-beta-D-manno-heptose 7-phosphate + ATP = D-glycero-beta-D-manno-heptose 1,7-bisphosphate + ADP + H(+). It catalyses the reaction D-glycero-beta-D-manno-heptose 1-phosphate + ATP + H(+) = ADP-D-glycero-beta-D-manno-heptose + diphosphate. It functions in the pathway nucleotide-sugar biosynthesis; ADP-L-glycero-beta-D-manno-heptose biosynthesis; ADP-L-glycero-beta-D-manno-heptose from D-glycero-beta-D-manno-heptose 7-phosphate: step 1/4. It participates in nucleotide-sugar biosynthesis; ADP-L-glycero-beta-D-manno-heptose biosynthesis; ADP-L-glycero-beta-D-manno-heptose from D-glycero-beta-D-manno-heptose 7-phosphate: step 3/4. In terms of biological role, catalyzes the phosphorylation of D-glycero-D-manno-heptose 7-phosphate at the C-1 position to selectively form D-glycero-beta-D-manno-heptose-1,7-bisphosphate. Catalyzes the ADP transfer from ATP to D-glycero-beta-D-manno-heptose 1-phosphate, yielding ADP-D-glycero-beta-D-manno-heptose. This is Bifunctional protein HldE from Wolinella succinogenes (strain ATCC 29543 / DSM 1740 / CCUG 13145 / JCM 31913 / LMG 7466 / NCTC 11488 / FDC 602W) (Vibrio succinogenes).